The chain runs to 114 residues: uncharacterized protein (114 aa).

This is an uncharacterized protein from Escherichia coli O6:H1 (strain CFT073 / ATCC 700928 / UPEC).